A 415-amino-acid polypeptide reads, in one-letter code: 3-isopropylmalate dehydratase large subunit (415 aa).

[4Fe-4S] cluster-binding residues include Cys-295, Cys-353, and Cys-356.

Belongs to the aconitase/IPM isomerase family. LeuC type 2 subfamily. In terms of assembly, heterodimer of LeuC and LeuD. [4Fe-4S] cluster serves as cofactor.

It catalyses the reaction (2R,3S)-3-isopropylmalate = (2S)-2-isopropylmalate. It participates in amino-acid biosynthesis; L-leucine biosynthesis; L-leucine from 3-methyl-2-oxobutanoate: step 2/4. In terms of biological role, catalyzes the isomerization between 2-isopropylmalate and 3-isopropylmalate, via the formation of 2-isopropylmaleate. This Pyrobaculum arsenaticum (strain DSM 13514 / JCM 11321 / PZ6) protein is 3-isopropylmalate dehydratase large subunit.